The sequence spans 198 residues: Eukaryotic translation initiation factor isoform 4E (198 aa).

Positions 1-25 are disordered; it reads MATDDVNEPLPAAAELPATEAEKQP. Residue A2 is modified to N-acetylalanine. Positions 8-19 are enriched in low complexity; it reads EPLPAAAELPAT. Residues 46–47 and 92–93 each bind mRNA; these read WG and WE. Cysteines 97 and 138 form a disulfide. Residue 145 to 152 coordinates mRNA; that stretch reads RPQSKQDK.

The protein belongs to the eukaryotic initiation factor 4E family. As to quaternary structure, EIF4F is a multi-subunit complex, the composition of which varies with external and internal environmental conditions. It is composed of at least EIF4A, EIF4E and EIF4G. EIF4E is also known to interact with other partners. In higher plants two isoforms of EIF4F have been identified, named isoform EIF4F and isoform EIF(iso)4F. Isoform EIF4F has subunits p220 and p26, whereas isoform EIF(iso)4F has subunits p82 and p28. This isoform interacts with the viral protein genome linked (VPg)-proteinase of turnip mosaic potyvirus. Interacts directly with LOX2. Interacts with BTF3. Post-translationally, according to the redox status, the Cys-97-Cys-138 disulfide bridge may have a role in regulating protein function by affecting its ability to bind capped mRNA. In terms of tissue distribution, abundant in floral organs and in young developing tissues.

Its function is as follows. Recognizes and binds the 7-methylguanosine-containing mRNA cap during an early step in the initiation of protein synthesis and facilitates ribosome binding by inducing the unwinding of the mRNAs secondary structures. Mediates susceptibility to Turnipmosaic potyvirus (TuMV) and Tobacco etch potyvirus (TEV). This is Eukaryotic translation initiation factor isoform 4E (EIF(ISO)4E) from Arabidopsis thaliana (Mouse-ear cress).